The sequence spans 836 residues: Serine/threonine-protein kinase ATG1 (836 aa).

Residues 21 to 321 enclose the Protein kinase domain; the sequence is YTVEKEIGKG…FNEFFNNEVV (301 aa). ATP-binding positions include 27 to 35 and lysine 50; that span reads IGKGSFAIV. Aspartate 168 serves as the catalytic Proton acceptor. 3 disordered regions span residues 387 to 425, 458 to 489, and 619 to 642; these read EHYR…GQTR, NNGP…GGRR, and CAID…TPGA. The segment covering 395 to 404 has biased composition (low complexity); it reads LQGQQQQQQQ. 3 stretches are compositionally biased toward polar residues: residues 411–425, 459–468, and 630–640; these read RGST…GQTR, NGPTTNNQGA, and GNPSSNQTLTP. The segment at 571–836 is interaction with ATG13; the sequence is ITPFVESLSA…RLKALKSKMS (266 aa).

Belongs to the protein kinase superfamily. Ser/Thr protein kinase family. APG1/unc-51/ULK1 subfamily. As to quaternary structure, homodimer. Dimerization requires the presence of ATG13. Forms a ternary complex with ATG13 and ATG17.

It is found in the cytoplasm. It localises to the preautophagosomal structure membrane. The catalysed reaction is L-seryl-[protein] + ATP = O-phospho-L-seryl-[protein] + ADP + H(+). The enzyme catalyses L-threonyl-[protein] + ATP = O-phospho-L-threonyl-[protein] + ADP + H(+). Its function is as follows. Serine/threonine protein kinase involved in the cytoplasm to vacuole transport (Cvt) and found to be essential in autophagy, where it is required for the formation of autophagosomes. Involved in the clearance of protein aggregates which cannot be efficiently cleared by the proteasome. Required for selective autophagic degradation of the nucleus (nucleophagy) as well as for mitophagy which contributes to regulate mitochondrial quantity and quality by eliminating the mitochondria to a basal level to fulfill cellular energy requirements and preventing excess ROS production. Also involved in endoplasmic reticulum-specific autophagic process, in selective removal of ER-associated degradation (ERAD) substrates. Plays a key role in ATG9 and ATG23 cycling through the pre-autophagosomal structure and is necessary to promote ATG18 binding to ATG9 through phosphorylation of ATG9. Catalyzes phosphorylation of ATG4, decreasing the interaction between ATG4 and ATG8 and impairing deconjugation of PE-conjugated forms of ATG8. This is Serine/threonine-protein kinase ATG1 from Kluyveromyces marxianus (strain DMKU3-1042 / BCC 29191 / NBRC 104275) (Yeast).